The chain runs to 262 residues: MKIHDFKIKKQEQKKISMLTCYDYPSACIVAESNIDCVLVGDSVAMAVHGYPTTIMATIEMMELHTQAVARGLGKQFLITDLPFLGHKSSQGHTVENVKRLLQAGAQAVKIEGADKDTCQTISHLVNAGIPVMGHIGLTPQSIHQLGGYKIQGKNSEQAETLLQQATTLEQAGCFAVVIECVPQDLAKTITDSLVIPTIGIGAGPGTDGQVLVWHDMLGLQTSFNPKFVKKYFRAKDHFIEALNSYVQQVQQMHFPANEHSF.

Positions 42 and 81 each coordinate Mg(2+). 3-methyl-2-oxobutanoate-binding positions include 42–43, Asp81, and Lys110; that span reads DS. Residue Glu112 coordinates Mg(2+). Glu180 acts as the Proton acceptor in catalysis.

This sequence belongs to the PanB family. As to quaternary structure, homodecamer; pentamer of dimers. The cofactor is Mg(2+).

The protein localises to the cytoplasm. It catalyses the reaction 3-methyl-2-oxobutanoate + (6R)-5,10-methylene-5,6,7,8-tetrahydrofolate + H2O = 2-dehydropantoate + (6S)-5,6,7,8-tetrahydrofolate. It functions in the pathway cofactor biosynthesis; (R)-pantothenate biosynthesis; (R)-pantoate from 3-methyl-2-oxobutanoate: step 1/2. In terms of biological role, catalyzes the reversible reaction in which hydroxymethyl group from 5,10-methylenetetrahydrofolate is transferred onto alpha-ketoisovalerate to form ketopantoate. This Legionella pneumophila (strain Lens) protein is 3-methyl-2-oxobutanoate hydroxymethyltransferase.